The sequence spans 73 residues: Translation initiation factor IF-1 (73 aa).

Positions 1–73 constitute an S1-like domain; sequence MAKKDGVIEI…TRGRIVYRYK (73 aa).

It belongs to the IF-1 family. In terms of assembly, component of the 30S ribosomal translation pre-initiation complex which assembles on the 30S ribosome in the order IF-2 and IF-3, IF-1 and N-formylmethionyl-tRNA(fMet); mRNA recruitment can occur at any time during PIC assembly.

It is found in the cytoplasm. Its function is as follows. One of the essential components for the initiation of protein synthesis. Stabilizes the binding of IF-2 and IF-3 on the 30S subunit to which N-formylmethionyl-tRNA(fMet) subsequently binds. Helps modulate mRNA selection, yielding the 30S pre-initiation complex (PIC). Upon addition of the 50S ribosomal subunit IF-1, IF-2 and IF-3 are released leaving the mature 70S translation initiation complex. In Leifsonia xyli subsp. xyli (strain CTCB07), this protein is Translation initiation factor IF-1.